We begin with the raw amino-acid sequence, 332 residues long: Ephrin-B2a (332 aa).

Positions 1-24 (MGDSLWRYYFGVLVIACKVNLSRA) are cleaved as a signal peptide. N-linked (GlcNAc...) asparagine glycans are attached at residues Asn-20 and Asn-33. In terms of domain architecture, Ephrin RBD spans 25-161 (LILDSIYWNT…TKSMKIIMKV (137 aa)). Residues 25 to 225 (LILDSIYWNT…VIGSEVALFA (201 aa)) lie on the Extracellular side of the membrane. Cystine bridges form between Cys-59/Cys-98 and Cys-86/Cys-150. Asn-136 carries N-linked (GlcNAc...) asparagine glycosylation. Residues 162-212 (GQNPSDPISPKDYPTSYPPKHPDLGGKDSKSNEVLKPDASPHGEDKGDGNK) form a disordered region. Positions 181–210 (KHPDLGGKDSKSNEVLKPDASPHGEDKGDG) are enriched in basic and acidic residues. Residue Asn-211 is glycosylated (N-linked (GlcNAc...) asparagine). Residues 226 to 246 (CIASASVIVIIIIIMLVFLLL) form a helical membrane-spanning segment. The Cytoplasmic portion of the chain corresponds to 247 to 332 (KYRRRHRKHS…QSPANIYYKV (86 aa)). The tract at residues 255 to 285 (HSPQHATTLSLSTLATPKRGGSGGNNNGSEP) is disordered. Residues 260–270 (ATTLSLSTLAT) show a composition bias toward low complexity. Residues 330–332 (YKV) carry the PDZ-binding motif.

It belongs to the ephrin family. As to quaternary structure, binds to the receptor tyrosine kinase ephb4. Post-translationally, inducible phosphorylation of tyrosine residues in the cytoplasmic domain.

It localises to the cell membrane. Cell surface transmembrane ligand for Eph receptors, a family of receptor tyrosine kinases which are crucial for migration, repulsion and adhesion during neuronal, vascular and epithelial development. Binds promiscuously Eph receptors residing on adjacent cells, leading to contact-dependent bidirectional signaling into neighboring cells. The signaling pathway downstream of the receptor is referred to as forward signaling while the signaling pathway downstream of the ephrin ligand is referred to as reverse signaling. Together with ephb4 may play a central role in heart morphogenesis and angiogenesis through regulation of cell adhesion and cell migration. The polypeptide is Ephrin-B2a (efnb2a) (Danio rerio (Zebrafish)).